The chain runs to 551 residues: Calcium-dependent protein kinase 13 (551 aa).

Gly2 carries N-myristoyl glycine lipidation. A disordered region spans residues 15 to 78; the sequence is SFKQTASQRH…APADLGSVLG (64 aa). One can recognise a Protein kinase domain in the interval 88 to 346; the sequence is YAMGRKLGQG…AHEVLCHPWI (259 aa). ATP contacts are provided by residues 94–102 and Lys117; that span reads LGQGQFGTT. The Proton acceptor role is filled by Asp212. The tract at residues 352 to 382 is autoinhibitory domain; that stretch reads APDRPLDPAVLSRIKQFSAMNKLKKMALRVI. 4 consecutive EF-hand domains span residues 389–424, 425–460, 461–496, and 497–530; these read EEIA…YGST, LKDT…LNKL, EREE…HNMP, and DAFL…GNMG. Ca(2+)-binding residues include Asp402, Asp404, Ser406, Glu413, Asp438, Asp440, Ser442, Thr444, Glu449, Asp474, Asp476, Ser478, Tyr480, Glu485, Asp508, Asp510, Asp512, Arg514, and Glu519.

It belongs to the protein kinase superfamily. Ser/Thr protein kinase family. CDPK subfamily. Expressed in vascular tissues of crowns and roots, vascular bundles and central cylinder. Expressed in roots, leaf blades, spikelets and developing seeds.

The protein resides in the membrane. It carries out the reaction L-seryl-[protein] + ATP = O-phospho-L-seryl-[protein] + ADP + H(+). It catalyses the reaction L-threonyl-[protein] + ATP = O-phospho-L-threonyl-[protein] + ADP + H(+). Activated by calcium. Autophosphorylation may play an important role in the regulation of the kinase activity. Its function is as follows. May play a role in signal transduction pathways that involve calcium as a second messenger. May function in signal transduction pathways that positively regulate responses to cold, salt and drought stresses. This Oryza sativa subsp. japonica (Rice) protein is Calcium-dependent protein kinase 13.